Consider the following 564-residue polypeptide: Interactor of constitutive active ROPs 3 (564 aa).

2 disordered regions span residues 1 to 73 and 88 to 135; these read MQTQ…SRIT and KAKD…SALE. Residues 33-44 are compositionally biased toward polar residues; sequence ESSSSPISATNR. Basic and acidic residues-rich tracts occupy residues 63–73 and 98–123; these read VSEKKRPSRIT and TSKK…KLEE. 2 coiled-coil regions span residues 70–133 and 231–514; these read SRIT…ETSA and AETE…AATA. Ser-533 bears the Phosphoserine mark.

This sequence belongs to the ICR family. As to quaternary structure, interacts with ARAC11 in vitro. As to expression, expressed in flowers.

Functionally, acts as a scaffold, mediating interaction of ROPs with different proteins. This Arabidopsis thaliana (Mouse-ear cress) protein is Interactor of constitutive active ROPs 3 (ICR3).